A 123-amino-acid polypeptide reads, in one-letter code: Small ribosomal subunit protein uS12 (123 aa).

Asp-89 bears the 3-methylthioaspartic acid mark. Residues 104 to 123 are disordered; sequence TAGVKDRKQARSKYGAKRPK. A compositionally biased stretch (basic residues) spans 113–123; it reads ARSKYGAKRPK.

It belongs to the universal ribosomal protein uS12 family. As to quaternary structure, part of the 30S ribosomal subunit. Contacts proteins S8 and S17. May interact with IF1 in the 30S initiation complex.

In terms of biological role, with S4 and S5 plays an important role in translational accuracy. Interacts with and stabilizes bases of the 16S rRNA that are involved in tRNA selection in the A site and with the mRNA backbone. Located at the interface of the 30S and 50S subunits, it traverses the body of the 30S subunit contacting proteins on the other side and probably holding the rRNA structure together. The combined cluster of proteins S8, S12 and S17 appears to hold together the shoulder and platform of the 30S subunit. The protein is Small ribosomal subunit protein uS12 of Neisseria gonorrhoeae (strain ATCC 700825 / FA 1090).